Consider the following 380-residue polypeptide: 2-aminoethylphosphonate--pyruvate transaminase (380 aa).

Residue lysine 204 is modified to N6-(pyridoxal phosphate)lysine.

This sequence belongs to the class-V pyridoxal-phosphate-dependent aminotransferase family. PhnW subfamily. In terms of assembly, homodimer. Pyridoxal 5'-phosphate is required as a cofactor.

It catalyses the reaction (2-aminoethyl)phosphonate + pyruvate = phosphonoacetaldehyde + L-alanine. Involved in phosphonate degradation. In Aeromonas hydrophila subsp. hydrophila (strain ATCC 7966 / DSM 30187 / BCRC 13018 / CCUG 14551 / JCM 1027 / KCTC 2358 / NCIMB 9240 / NCTC 8049), this protein is 2-aminoethylphosphonate--pyruvate transaminase.